The sequence spans 295 residues: 4-diphosphocytidyl-2-C-methyl-D-erythritol kinase (295 aa).

The active site involves lysine 22. Proline 106–serine 116 lines the ATP pocket. Aspartate 148 is a catalytic residue.

It belongs to the GHMP kinase family. IspE subfamily.

The enzyme catalyses 4-CDP-2-C-methyl-D-erythritol + ATP = 4-CDP-2-C-methyl-D-erythritol 2-phosphate + ADP + H(+). The protein operates within isoprenoid biosynthesis; isopentenyl diphosphate biosynthesis via DXP pathway; isopentenyl diphosphate from 1-deoxy-D-xylulose 5-phosphate: step 3/6. Functionally, catalyzes the phosphorylation of the position 2 hydroxy group of 4-diphosphocytidyl-2C-methyl-D-erythritol. This Xanthomonas euvesicatoria pv. vesicatoria (strain 85-10) (Xanthomonas campestris pv. vesicatoria) protein is 4-diphosphocytidyl-2-C-methyl-D-erythritol kinase.